Reading from the N-terminus, the 240-residue chain is Ribosomal RNA small subunit methyltransferase G (240 aa).

Residues G78, F83, 129 to 130 (AE), and R147 contribute to the S-adenosyl-L-methionine site. The segment at 218-240 (RRQTSKKYPRKPGTPNKSPLLEN) is disordered.

Belongs to the methyltransferase superfamily. RNA methyltransferase RsmG family.

Its subcellular location is the cytoplasm. In terms of biological role, specifically methylates the N7 position of guanine in position 535 of 16S rRNA. This is Ribosomal RNA small subunit methyltransferase G from Staphylococcus haemolyticus (strain JCSC1435).